The chain runs to 267 residues: 4-hydroxy-tetrahydrodipicolinate reductase (267 aa).

Residues 9–14 (GVSGRM) and Asp-35 contribute to the NAD(+) site. Arg-36 contributes to the NADP(+) binding site. Residues 98-100 (GTT) and 122-125 (APNM) contribute to the NAD(+) site. The Proton donor/acceptor role is filled by His-155. His-156 serves as a coordination point for (S)-2,3,4,5-tetrahydrodipicolinate. The active-site Proton donor is the Lys-159. 165–166 (GT) provides a ligand contact to (S)-2,3,4,5-tetrahydrodipicolinate.

Belongs to the DapB family.

It is found in the cytoplasm. The catalysed reaction is (S)-2,3,4,5-tetrahydrodipicolinate + NAD(+) + H2O = (2S,4S)-4-hydroxy-2,3,4,5-tetrahydrodipicolinate + NADH + H(+). It catalyses the reaction (S)-2,3,4,5-tetrahydrodipicolinate + NADP(+) + H2O = (2S,4S)-4-hydroxy-2,3,4,5-tetrahydrodipicolinate + NADPH + H(+). It functions in the pathway amino-acid biosynthesis; L-lysine biosynthesis via DAP pathway; (S)-tetrahydrodipicolinate from L-aspartate: step 4/4. Functionally, catalyzes the conversion of 4-hydroxy-tetrahydrodipicolinate (HTPA) to tetrahydrodipicolinate. The sequence is that of 4-hydroxy-tetrahydrodipicolinate reductase from Thiobacillus denitrificans (strain ATCC 25259 / T1).